The primary structure comprises 121 residues: Thioredoxin-like protein (121 aa).

The 111-residue stretch at 2–112 (VHHITSNDEL…LGAAAEKLGG (111 aa)) folds into the Thioredoxin domain. A disulfide bridge connects residues Cys30 and Cys33.

Belongs to the thioredoxin family.

Participates in various redox reactions through the reversible oxidation of its active center dithiol to a disulfide and catalyzes dithiol-disulfide exchange reactions. The sequence is that of Thioredoxin-like protein from Fusarium culmorum.